Here is a 600-residue protein sequence, read N- to C-terminus: Malto-oligosyltrehalose trehalohydrolase (600 aa).

The segment at 1-34 is disordered; it reads MTQTQPVTPTPPASFQTQHDPRTRLGATPLPGGA. 273-278 contacts substrate; that stretch reads RLDATP. The active-site Nucleophile is the Asp-275. Glu-308 acts as the Proton donor in catalysis. Substrate-binding positions include 328-332, Glu-376, and 399-404; these read DDFHH and HDQIGN.

The protein belongs to the glycosyl hydrolase 13 family. Monomer.

It localises to the cytoplasm. The catalysed reaction is hydrolysis of (1-&gt;4)-alpha-D-glucosidic linkage in 4-alpha-D-[(1-&gt;4)-alpha-D-glucanosyl]n trehalose to yield trehalose and (1-&gt;4)-alpha-D-glucan.. It participates in glycan biosynthesis; trehalose biosynthesis. This chain is Malto-oligosyltrehalose trehalohydrolase (treZ), found in Deinococcus radiodurans (strain ATCC 13939 / DSM 20539 / JCM 16871 / CCUG 27074 / LMG 4051 / NBRC 15346 / NCIMB 9279 / VKM B-1422 / R1).